A 131-amino-acid polypeptide reads, in one-letter code: Global transcriptional regulator Spx (131 aa).

A disulfide bond links cysteine 10 and cysteine 13.

This sequence belongs to the ArsC family. Spx subfamily. In terms of assembly, interacts with the C-terminal domain of the alpha subunit of the RNAP.

The protein localises to the cytoplasm. Functionally, global transcriptional regulator that plays a key role in stress response and exerts either positive or negative regulation of genes. Acts by interacting with the C-terminal domain of the alpha subunit of the RNA polymerase (RNAP). This interaction can enhance binding of RNAP to the promoter region of target genes and stimulate their transcription, or block interaction of RNAP with activator. The protein is Global transcriptional regulator Spx of Staphylococcus saprophyticus subsp. saprophyticus (strain ATCC 15305 / DSM 20229 / NCIMB 8711 / NCTC 7292 / S-41).